Consider the following 248-residue polypeptide: PF03932 family protein CutC (248 aa).

It belongs to the CutC family. In terms of assembly, homodimer.

It is found in the cytoplasm. This chain is PF03932 family protein CutC, found in Escherichia coli O9:H4 (strain HS).